Here is a 791-residue protein sequence, read N- to C-terminus: Biofilm architecture maintenance protein MbaA (791 aa).

The signal sequence occupies residues methionine 1–serine 23. The Periplasmic segment spans residues tyrosine 24–glutamate 259. Residues leucine 260–tyrosine 280 form a helical membrane-spanning segment. Residues arginine 281–glutamine 333 form the HAMP domain. Over arginine 281–arginine 791 the chain is Cytoplasmic. The 142-residue stretch at glutamine 368–glutamine 509 folds into the GGDEF domain. In terms of domain architecture, EAL spans arginine 518–asparagine 769.

The protein resides in the cell inner membrane. Its function is as follows. Plays an essential role in the maintenance and the formation of the three-dimensional structure of the biofilms at the later stages of their development. Absence of mbaA promotes the accumulation of larger amount of biomass on the surfaces at later stage of development, results in the overproduction of an extracellular polymeric substance that accumulates in the matrix of biofilms. This yields biofilms lacking the typical structure consisting of pillars of cells separated by fluid filled channels. The sequence is that of Biofilm architecture maintenance protein MbaA (mbaA) from Vibrio cholerae serotype O1 (strain ATCC 39315 / El Tor Inaba N16961).